We begin with the raw amino-acid sequence, 529 residues long: uncharacterized protein (529 aa).

The Radical SAM core domain maps to aspartate 157–aspartate 410. Positions 171, 176, and 179 each coordinate [4Fe-4S] cluster.

It depends on [4Fe-4S] cluster as a cofactor.

This is an uncharacterized protein from Archaeoglobus fulgidus (strain ATCC 49558 / DSM 4304 / JCM 9628 / NBRC 100126 / VC-16).